The following is a 461-amino-acid chain: tRNA modification GTPase MnmE (461 aa).

(6S)-5-formyl-5,6,7,8-tetrahydrofolate-binding residues include arginine 23, glutamate 84, and arginine 123. The TrmE-type G domain occupies 216–383; that stretch reads GARAALIGRP…LGATVARLLL (168 aa). Residue asparagine 226 participates in K(+) binding. Residues 226 to 231, 245 to 251, and 270 to 273 each bind GTP; these read NAGKSS, TPIPGTT, and DTAG. Mg(2+) is bound at residue serine 230. Residues threonine 245, isoleucine 247, and threonine 250 each contribute to the K(+) site. A Mg(2+)-binding site is contributed by threonine 251. Lysine 461 contacts (6S)-5-formyl-5,6,7,8-tetrahydrofolate.

This sequence belongs to the TRAFAC class TrmE-Era-EngA-EngB-Septin-like GTPase superfamily. TrmE GTPase family. As to quaternary structure, homodimer. Heterotetramer of two MnmE and two MnmG subunits. K(+) serves as cofactor.

It is found in the cytoplasm. Its function is as follows. Exhibits a very high intrinsic GTPase hydrolysis rate. Involved in the addition of a carboxymethylaminomethyl (cmnm) group at the wobble position (U34) of certain tRNAs, forming tRNA-cmnm(5)s(2)U34. The chain is tRNA modification GTPase MnmE from Roseiflexus sp. (strain RS-1).